A 947-amino-acid chain; its full sequence is Bromodomain testis-specific protein (947 aa).

In terms of domain architecture, Bromo 1 spans arginine 27–methionine 133. Residue asparagine 109 participates in JQ1 binding. Position 187 is a phosphoserine (serine 187). The interval glutamine 202 to serine 228 is disordered. The Nuclear localization signal motif lies at lysine 209 to proline 220. The segment covering threonine 217–serine 228 has biased composition (polar residues). The Bromo 2 domain maps to valine 267–isoleucine 376. 4 disordered regions span residues glutamate 395–valine 420, proline 444–asparagine 511, asparagine 610–glutamate 698, and asparagine 882–glutamate 924. Residues aspartate 417–asparagine 470 adopt a coiled-coil conformation. The segment covering lysine 447–glutamate 462 has biased composition (basic residues). A compositionally biased stretch (basic and acidic residues) spans asparagine 470–lysine 481. A compositionally biased stretch (basic residues) spans glutamate 482–glutamine 494. In terms of domain architecture, NET spans lysine 500 to proline 582. Residues lysine 591 to lysine 621 adopt a coiled-coil conformation. Residues leucine 637 to serine 662 show a composition bias toward low complexity. 2 stretches are compositionally biased toward basic and acidic residues: residues threonine 674–asparagine 692 and serine 885–glutamate 924.

This sequence belongs to the BET family. Interacts with mRNA splicing machinery proteins SRSF2, DDX5, HNRNPK and TARDBP. Interacts with the acetylated N-terminus of histone H1, H2, H3 and H4. Interacts with P-TEFb components CDK9 and CCNT1/cyclin-T1. Interacts with SMARCE1. Interacts with the acetylated N-terminus of histone H1.4, H2A, H2B, H3 and H4. Ubiquitinated in a SPOP-dependent manner, leading to proteasomal degradation. In terms of tissue distribution, testis-specific. A 3-fold higher expression is seen in adult testis than in embryo testis. Expression seems to be correlated with histone H4 hyperacetylation during the haploid phase of spermatogenesis (spermiogenesis). No expression, or very low expression is seen in patients' testes with abnormal spermatogenesis. Expressed in cancers such as non-small cell lung cancer and squamous cell carcinomas of the head and neck as well as of esophagus, but not in melanoma or in cancers of the colon, breast, kidney and bladder.

It is found in the nucleus. In terms of biological role, testis-specific chromatin protein that specifically binds histone H4 acetylated at 'Lys-5' and 'Lys-8' (H4K5ac and H4K8ac, respectively) and plays a key role in spermatogenesis. Required in late pachytene spermatocytes: plays a role in meiotic and post-meiotic cells by binding to acetylated histones at the promoter of specific meiotic and post-meiotic genes, facilitating their activation at the appropriate time. In the post-meiotic phase of spermatogenesis, binds to hyperacetylated histones and participates in their general removal from DNA. Also recognizes and binds a subset of butyrylated histones: able to bind histone H4 butyrylated at 'Lys-8' (H4K8ac), while it is not able to bind H4 butyrylated at 'Lys-5' (H4K5ac). Also acts as a component of the splicing machinery in pachytene spermatocytes and round spermatids and participates in 3'-UTR truncation of specific mRNAs in post-meiotic spermatids. Required for chromocenter organization, a structure comprised of peri-centromeric heterochromatin. This Homo sapiens (Human) protein is Bromodomain testis-specific protein (BRDT).